The primary structure comprises 365 residues: S-adenosylmethionine:tRNA ribosyltransferase-isomerase (365 aa).

It belongs to the QueA family. As to quaternary structure, monomer.

It localises to the cytoplasm. The catalysed reaction is 7-aminomethyl-7-carbaguanosine(34) in tRNA + S-adenosyl-L-methionine = epoxyqueuosine(34) in tRNA + adenine + L-methionine + 2 H(+). It participates in tRNA modification; tRNA-queuosine biosynthesis. Its function is as follows. Transfers and isomerizes the ribose moiety from AdoMet to the 7-aminomethyl group of 7-deazaguanine (preQ1-tRNA) to give epoxyqueuosine (oQ-tRNA). In Rickettsia africae (strain ESF-5), this protein is S-adenosylmethionine:tRNA ribosyltransferase-isomerase.